The primary structure comprises 684 residues: MIQLYGLRKDYRVGDHDLPVLKGITLNIEAGEYVALMGSSGSGKTTLMNLLGSLDHPTDGDYHLAGIDVSSLTPLELAAFRSQHIGFVFQNFNLLPRATALDNVMLPTIYASDGRSRRECIEDATKLLESVGLGGRLDHMPNQLSGGERQRIAIARALMNRPKLLLADEPTGNLDTVTEQEILALFRQLNQEHGITLVVVTHDAEVAHEADRVVRMKDGLVAEDVRQRASTVDRSRLANSRAEPLREPASAWSLPATWNAIVVAVLALRRNALRTVLTMLGVIIGVASVISTMELSAGASTAIEETVASMGASMLTISPGKASSTSGRQRPIQIIPDDVVAVAEQCSAVKVAAPLVYSQVQLVRQNRRWSPNLALGTTSQYLAARNWDQLELGTPFTQEQVLDAAKVCILGKTVAHELFDSEYPIGEEIRVNGVPLRVVGVLTEKGGDVIGNDQDDIIIGPWTTFKLRVNSSTGATAQFSTFADQMPPMQLASTRRSTQREEIHQIYVEAESPDHVELARQQITQVLSRRHNVEPAGAYRINDITEVSKVVGQVVGGVSALGLVIAGVSLMVGGVGIMNIMLVSVTERTREIGLRMAVGANRSAILRQFLIEATVLCVVGGFIGIFAGHMWSVLVGRVIGWPTAMSIWAPIVAVTVAATVGIVFGYYPARTASRLNPIDALRYE.

Residues 2–243 (IQLYGLRKDY…RSRLANSRAE (242 aa)) form the ABC transporter domain. 38 to 45 (GSSGSGKT) contacts ATP. Transmembrane regions (helical) follow at residues 248-268 (PASA…VLAL), 275-295 (TVLT…TMEL), 563-583 (LVIA…IMLV), 615-635 (VLCV…SVLV), and 644-664 (AMSI…GIVF).

It belongs to the ABC transporter superfamily. Macrolide exporter (TC 3.A.1.122) family. Homodimer.

The protein localises to the cell inner membrane. In terms of biological role, non-canonical ABC transporter that contains transmembrane domains (TMD), which form a pore in the inner membrane, and an ATP-binding domain (NBD), which is responsible for energy generation. Confers resistance against macrolides. The chain is Macrolide export ATP-binding/permease protein MacB from Rhodopirellula baltica (strain DSM 10527 / NCIMB 13988 / SH1).